The primary structure comprises 478 residues: DNA gyrase subunit B (478 aa).

In terms of domain architecture, Toprim spans Cys319–Pro438. Mg(2+)-binding residues include Glu325, Asp403, and Asp405.

The protein belongs to the type II topoisomerase GyrB family. In terms of assembly, heterotetramer, composed of two GyrA and two GyrB chains. In the heterotetramer, GyrA contains the active site tyrosine that forms a transient covalent intermediate with DNA, while GyrB binds cofactors and catalyzes ATP hydrolysis. Requires Mg(2+) as cofactor. It depends on Mn(2+) as a cofactor. Ca(2+) is required as a cofactor.

The protein localises to the cytoplasm. The catalysed reaction is ATP-dependent breakage, passage and rejoining of double-stranded DNA.. Functionally, a type II topoisomerase that negatively supercoils closed circular double-stranded (ds) DNA in an ATP-dependent manner to modulate DNA topology and maintain chromosomes in an underwound state. Negative supercoiling favors strand separation, and DNA replication, transcription, recombination and repair, all of which involve strand separation. Also able to catalyze the interconversion of other topological isomers of dsDNA rings, including catenanes and knotted rings. Type II topoisomerases break and join 2 DNA strands simultaneously in an ATP-dependent manner. The chain is DNA gyrase subunit B (gyrB) from Cytophaga hutchinsonii.